The following is a 342-amino-acid chain: Uroporphyrinogen decarboxylase (342 aa).

Substrate-binding positions include 24–28, Asp74, Tyr151, Ser206, and His322; that span reads RQAGR.

This sequence belongs to the uroporphyrinogen decarboxylase family. In terms of assembly, homodimer.

Its subcellular location is the cytoplasm. The enzyme catalyses uroporphyrinogen III + 4 H(+) = coproporphyrinogen III + 4 CO2. It participates in porphyrin-containing compound metabolism; protoporphyrin-IX biosynthesis; coproporphyrinogen-III from 5-aminolevulinate: step 4/4. Functionally, catalyzes the decarboxylation of four acetate groups of uroporphyrinogen-III to yield coproporphyrinogen-III. The chain is Uroporphyrinogen decarboxylase from Paracoccus denitrificans (strain Pd 1222).